A 305-amino-acid chain; its full sequence is UDP-3-O-acyl-N-acetylglucosamine deacetylase (305 aa).

The Zn(2+) site is built by His-79, His-238, and Asp-242. His-265 acts as the Proton donor in catalysis.

The protein belongs to the LpxC family. It depends on Zn(2+) as a cofactor.

It carries out the reaction a UDP-3-O-[(3R)-3-hydroxyacyl]-N-acetyl-alpha-D-glucosamine + H2O = a UDP-3-O-[(3R)-3-hydroxyacyl]-alpha-D-glucosamine + acetate. It participates in glycolipid biosynthesis; lipid IV(A) biosynthesis; lipid IV(A) from (3R)-3-hydroxytetradecanoyl-[acyl-carrier-protein] and UDP-N-acetyl-alpha-D-glucosamine: step 2/6. Its function is as follows. Catalyzes the hydrolysis of UDP-3-O-myristoyl-N-acetylglucosamine to form UDP-3-O-myristoylglucosamine and acetate, the committed step in lipid A biosynthesis. The sequence is that of UDP-3-O-acyl-N-acetylglucosamine deacetylase from Vibrio parahaemolyticus serotype O3:K6 (strain RIMD 2210633).